Consider the following 635-residue polypeptide: Chaperone protein DnaK (635 aa).

A Phosphothreonine; by autocatalysis modification is found at threonine 198. Over residues 601–616 the composition is skewed to low complexity; the sequence is AQQQAQAQGANAGQSS. Residues 601-635 form a disordered region; that stretch reads AQQQAQAQGANAGQSSAKEDDVVDAEFEEVNDDKK. Positions 621–635 are enriched in acidic residues; it reads DVVDAEFEEVNDDKK.

Belongs to the heat shock protein 70 family.

Functionally, acts as a chaperone. The sequence is that of Chaperone protein DnaK from Vibrio cholerae serotype O1 (strain ATCC 39541 / Classical Ogawa 395 / O395).